Reading from the N-terminus, the 715-residue chain is PKTFGITSPISLAAAKDTDCTLMQKLIETLKPYGVFEEEEQLQHRILGKLNNLVKEWIREISELKHLPQSVIENVGGKIFTFGPYRLGVHTKGADIDALCVAPRHVDRSDFFSSFYDKLKQQEEVKDLRSVEEAFVPVIKLCFDGIEIDILFARLALQTIPEDLDLRDDSLLKNLDIRCIRSLNGCRVTDEILHLVPNIDSFRLTLRAIKLWAKRHNIYSNILGFLGGVSWAMLVARTCQLYPNAIASTLVHKFFLVFSKWEWPNPVLLKQPEECNLNLPVWDPRVNPSDRYHLMPIITPAYPQQNSTYNVSVSTRAVMIEEFKQGLAITDEILLGKAEWSKLFDAPNFFQKYKHYILLLASAPTEKQRLEWVGLVESKIRILVGSLEKNEFITLAHVNPRSFPAPSENMEKEEFRTMWVIGLVFKKMENSENLSVDLTYDIQSFTDTVDRQAINSKMFETEMKIAAMHVKRKQLHQLQPSHVSPKKKKHSFEGVKLLSLNDSSIDLSVDSDNSMSVPSPTNATRTSPLNSSGLSQGNSPAAPVSFSVTNVQATDVMVPQNNSTENLGGSLNESIPESATHPGFSSTPKPLVTRVVSSMRLVNQLQKPVSNTITKMPSPVAGVKRTSSPSNEDSPKKNKTEEDENDSSISADVDDQNKLETEELKEVHSEEKSSSPVPGSLPFSQQSSTDLSDISVVPATPIPVIKNSIKLRLNR.

ATP contacts are provided by residues 82 to 84, Thr-91, 95 to 97, Asp-149, Lys-210, Tyr-219, and 228 to 229; these read FGP, DID, and GV. Positions 95, 97, and 149 each coordinate Mg(2+). A Nuclear localization signal 1 motif is present at residues 472 to 489; sequence RKQLHQLQPSHVSPKKKK. Disordered stretches follow at residues 510 to 543, 560 to 590, and 607 to 693; these read DSDN…PAAP, QNNS…TPKP, and KPVS…DLSD. Polar residues-rich tracts occupy residues 515 to 539 and 560 to 588; these read MSVP…QGNS and QNNS…SSTP. The Nuclear localization signal 2 motif lies at 624–639; the sequence is KRTSSPSNEDSPKKNK. A compositionally biased stretch (basic and acidic residues) spans 655 to 673; that stretch reads DQNKLETEELKEVHSEEKS. The span at 674–692 shows a compositional bias: polar residues; that stretch reads SSPVPGSLPFSQQSSTDLS.

It belongs to the poly(A) polymerase family. As to quaternary structure, monomer. The cofactor is Mg(2+). Mn(2+) serves as cofactor.

Its subcellular location is the nucleus. It carries out the reaction RNA(n) + ATP = RNA(n)-3'-adenine ribonucleotide + diphosphate. Polymerase that creates the 3'-poly(A) tail of mRNA's. May acquire specificity through interaction with a cleavage and polyadenylation factor (CPSF). This Xenopus laevis (African clawed frog) protein is Poly(A) polymerase alpha-A (papola-a).